The following is a 300-amino-acid chain: uncharacterized protein (300 aa).

The protein belongs to the histone deacetylase family.

In terms of biological role, putative deacetylase. This is an uncharacterized protein from Picosynechococcus sp. (strain ATCC 27264 / PCC 7002 / PR-6) (Agmenellum quadruplicatum).